The following is a 425-amino-acid chain: Glutamate-1-semialdehyde 2,1-aminomutase (425 aa).

Lys265 bears the N6-(pyridoxal phosphate)lysine mark.

The protein belongs to the class-III pyridoxal-phosphate-dependent aminotransferase family. HemL subfamily. As to quaternary structure, homodimer. Requires pyridoxal 5'-phosphate as cofactor.

The protein localises to the cytoplasm. The enzyme catalyses (S)-4-amino-5-oxopentanoate = 5-aminolevulinate. Its pathway is porphyrin-containing compound metabolism; protoporphyrin-IX biosynthesis; 5-aminolevulinate from L-glutamyl-tRNA(Glu): step 2/2. This Nitrosospira multiformis (strain ATCC 25196 / NCIMB 11849 / C 71) protein is Glutamate-1-semialdehyde 2,1-aminomutase.